Reading from the N-terminus, the 331-residue chain is UPF0324 membrane protein SAR0338 (331 aa).

11 consecutive transmembrane segments (helical) span residues 9-26 (FMIG…SFLA), 31-48 (ILDK…AILY), 69-88 (LLRF…DIIG), 93-115 (LLAI…NKLL), 122-144 (ALLL…APIF), 154-176 (SIGI…YAIF), 183-202 (YGAW…LAGG), 217-234 (LGRV…ILIM), 247-269 (ISIP…VTIP), 273-295 (LNIL…GLNV), and 308-330 (LMTI…HWLY).

This sequence belongs to the UPF0324 family.

It is found in the cell membrane. The protein is UPF0324 membrane protein SAR0338 of Staphylococcus aureus (strain MRSA252).